Consider the following 320-residue polypeptide: Lipoyl synthase (320 aa).

7 residues coordinate [4Fe-4S] cluster: Cys-67, Cys-72, Cys-78, Cys-93, Cys-97, Cys-100, and Ser-307. The region spanning 79-296 (FNHGTATFMI…RDKANEMGFE (218 aa)) is the Radical SAM core domain.

It belongs to the radical SAM superfamily. Lipoyl synthase family. [4Fe-4S] cluster is required as a cofactor.

The protein resides in the cytoplasm. The enzyme catalyses [[Fe-S] cluster scaffold protein carrying a second [4Fe-4S](2+) cluster] + N(6)-octanoyl-L-lysyl-[protein] + 2 oxidized [2Fe-2S]-[ferredoxin] + 2 S-adenosyl-L-methionine + 4 H(+) = [[Fe-S] cluster scaffold protein] + N(6)-[(R)-dihydrolipoyl]-L-lysyl-[protein] + 4 Fe(3+) + 2 hydrogen sulfide + 2 5'-deoxyadenosine + 2 L-methionine + 2 reduced [2Fe-2S]-[ferredoxin]. It functions in the pathway protein modification; protein lipoylation via endogenous pathway; protein N(6)-(lipoyl)lysine from octanoyl-[acyl-carrier-protein]: step 2/2. Its function is as follows. Catalyzes the radical-mediated insertion of two sulfur atoms into the C-6 and C-8 positions of the octanoyl moiety bound to the lipoyl domains of lipoate-dependent enzymes, thereby converting the octanoylated domains into lipoylated derivatives. The protein is Lipoyl synthase of Haemophilus influenzae (strain PittEE).